Consider the following 377-residue polypeptide: Nitric oxide reductase FlRd-NAD(+) reductase (377 aa).

This sequence belongs to the FAD-dependent oxidoreductase family. FAD serves as cofactor.

The protein resides in the cytoplasm. It catalyses the reaction 2 reduced [nitric oxide reductase rubredoxin domain] + NAD(+) + H(+) = 2 oxidized [nitric oxide reductase rubredoxin domain] + NADH. Its pathway is nitrogen metabolism; nitric oxide reduction. Functionally, one of at least two accessory proteins for anaerobic nitric oxide (NO) reductase. Reduces the rubredoxin moiety of NO reductase. This chain is Nitric oxide reductase FlRd-NAD(+) reductase, found in Salmonella paratyphi B (strain ATCC BAA-1250 / SPB7).